The sequence spans 96 residues: Protein E7 (96 aa).

Positions 1 to 42 (MIGNQPNVNNLDVNLEELVLPVSLLADEELSPDGDPEEEEHY) are E7 terminal domain. The segment at 50-86 (CKPCGAGVRFTIIATPSAVITLRQLLLQEVFLTCLRC) is a zinc-finger region. Positions 68–76 (VITLRQLLL) match the Nuclear export signal motif.

Belongs to the papillomaviridae E7 protein family. Homodimer. Homooligomer. Interacts with host RB1; this interaction induces dissociation of RB1-E2F1 complex thereby disrupting RB1 activity. Interacts with host EP300; this interaction represses EP300 transcriptional activity. Interacts with protein E2; this interaction inhibits E7 oncogenic activity. Interacts with host TMEM173/STING; this interaction impairs the ability of TMEM173/STING to sense cytosolic DNA and promote the production of type I interferon (IFN-alpha and IFN-beta). Highly phosphorylated.

It localises to the host cytoplasm. It is found in the host nucleus. Plays a role in viral genome replication by driving entry of quiescent cells into the cell cycle. Stimulation of progression from G1 to S phase allows the virus to efficiently use the cellular DNA replicating machinery to achieve viral genome replication. E7 protein has both transforming and trans-activating activities. Induces the disassembly of the E2F1 transcription factor from RB1, with subsequent transcriptional activation of E2F1-regulated S-phase genes. Interferes with host histone deacetylation mediated by HDAC1 and HDAC2, leading to transcription activation. Also plays a role in the inhibition of both antiviral and antiproliferative functions of host interferon alpha. Interaction with host TMEM173/STING impairs the ability of TMEM173/STING to sense cytosolic DNA and promote the production of type I interferon (IFN-alpha and IFN-beta). The chain is Protein E7 from Homo sapiens (Human).